A 141-amino-acid chain; its full sequence is Large ribosomal subunit protein uL11 (141 aa).

It belongs to the universal ribosomal protein uL11 family. In terms of assembly, part of the ribosomal stalk of the 50S ribosomal subunit. Interacts with L10 and the large rRNA to form the base of the stalk. L10 forms an elongated spine to which L12 dimers bind in a sequential fashion forming a multimeric L10(L12)X complex. One or more lysine residues are methylated.

Functionally, forms part of the ribosomal stalk which helps the ribosome interact with GTP-bound translation factors. This is Large ribosomal subunit protein uL11 from Prochlorococcus marinus subsp. pastoris (strain CCMP1986 / NIES-2087 / MED4).